We begin with the raw amino-acid sequence, 138 residues long: Nucleoside diphosphate kinase (138 aa).

The ATP site is built by Lys9, Phe57, Arg85, Thr91, Arg102, and Asn112. Residue His115 is the Pros-phosphohistidine intermediate of the active site.

Belongs to the NDK family. As to quaternary structure, homotetramer. Mg(2+) serves as cofactor.

It is found in the cytoplasm. It catalyses the reaction a 2'-deoxyribonucleoside 5'-diphosphate + ATP = a 2'-deoxyribonucleoside 5'-triphosphate + ADP. It carries out the reaction a ribonucleoside 5'-diphosphate + ATP = a ribonucleoside 5'-triphosphate + ADP. Its function is as follows. Major role in the synthesis of nucleoside triphosphates other than ATP. The ATP gamma phosphate is transferred to the NDP beta phosphate via a ping-pong mechanism, using a phosphorylated active-site intermediate. This Desulforapulum autotrophicum (strain ATCC 43914 / DSM 3382 / VKM B-1955 / HRM2) (Desulfobacterium autotrophicum) protein is Nucleoside diphosphate kinase.